Consider the following 218-residue polypeptide: MAKTSTSVIAAKTLVHAAALAPIALLGWQFWQVWQGGSDALGADPVAEIEHRTGLWALRFLLITLAITPLRQLTGQAVVIRFRRMLGLYAFFYASVHLAAYLTLDLRGFWTQIFEEILKRPYITVGFAAWLLLMPLAITSTQGWMRRLKRNWGRLHTLIYPIGLLAVLHFWWLVKSDIREPALYAGILAVLLGWRVWKKLSARRTTARRSTPPPATPR.

5 helical membrane passes run 14 to 34 (LVHA…WQVW), 60 to 80 (FLLI…AVVI), 86 to 106 (LGLY…TLDL), 121 to 141 (PYIT…ITST), and 155 to 175 (LHTL…WLVK).

This sequence belongs to the MsrQ family. In terms of assembly, heterodimer of a catalytic subunit (MsrP) and a heme-binding subunit (MsrQ). The cofactor is FMN. Heme b serves as cofactor.

The protein resides in the cell inner membrane. Its function is as follows. Part of the MsrPQ system that repairs oxidized periplasmic proteins containing methionine sulfoxide residues (Met-O), using respiratory chain electrons. Thus protects these proteins from oxidative-stress damage caused by reactive species of oxygen and chlorine generated by the host defense mechanisms. MsrPQ is essential for the maintenance of envelope integrity under bleach stress, rescuing a wide series of structurally unrelated periplasmic proteins from methionine oxidation. MsrQ provides electrons for reduction to the reductase catalytic subunit MsrP, using the quinone pool of the respiratory chain. In Xanthomonas euvesicatoria pv. vesicatoria (strain 85-10) (Xanthomonas campestris pv. vesicatoria), this protein is Protein-methionine-sulfoxide reductase heme-binding subunit MsrQ.